Consider the following 340-residue polypeptide: MGFIDEVKLCLKAGDGGDGCASFRREKFVEFGGPNGGNGGKGGNIVFISDANLNTLLHFRYRRHIKADSGKNGAGRDRSGTAGKDVILKVPVGAQIIDEESEEIIVDLDKPGMEFQVAQGGKGGLGNTNFKSSTNKAPRHFTYGQPGEEKHVLLKLKVLSDVGIIGMPNAGKSKFLTRCSNSDTKVGDYPFTTVRPHLGMVKVDDSEVVIADIPGIITDAHLGVGLGHKFLKHIERCQILLHLIDVTHDDVVSAYSCIHNELELYNSDLVEKEEIVVLNKCDLLREAEILEKKNHLANYLNKEVLCLSINGDLQPILRLLSEKLKKSNSKEIDVYDPFKA.

One can recognise an Obg domain in the interval 1–159 (MGFIDEVKLC…KHVLLKLKVL (159 aa)). One can recognise an OBG-type G domain in the interval 160–329 (SDVGIIGMPN…LSEKLKKSNS (170 aa)). Residues 166–173 (GMPNAGKS), 191–195 (FTTVR), 212–215 (DIPG), 279–282 (NKCD), and 310–312 (NGD) contribute to the GTP site. Residues S173 and T193 each coordinate Mg(2+).

Belongs to the TRAFAC class OBG-HflX-like GTPase superfamily. OBG GTPase family. As to quaternary structure, monomer. It depends on Mg(2+) as a cofactor.

The protein localises to the cytoplasm. An essential GTPase which binds GTP, GDP and possibly (p)ppGpp with moderate affinity, with high nucleotide exchange rates and a fairly low GTP hydrolysis rate. Plays a role in control of the cell cycle, stress response, ribosome biogenesis and in those bacteria that undergo differentiation, in morphogenesis control. The sequence is that of GTPase Obg from Wolbachia sp. subsp. Drosophila simulans (strain wRi).